We begin with the raw amino-acid sequence, 238 residues long: MAVIFENPQYVHVLRMLNSMPARDKTFRALQFVAKLLSWHLFYGGSSLSTVNKWKKLESNISFSRKLFSIGKVLDYICKVYFDSLKLQNPLSGNKSALPTISFTKDVAFAGYATAELIGWFNKTELMPCSHSKQISTIGKQCLAVALLSSCLAGCYELQQNSKKIKSATQEASEKDSTSLQTLQKERKEILFFALQNALDATIPLAELDILKVNDGFVAAAGITTSLMSVYKTWIGSY.

Belongs to the peroxin-11 family.

The protein resides in the mitochondrion. Its subcellular location is the peroxisome membrane. Involved in peroxisomal proliferation. Promotes peroxisome division and biogenesis. The polypeptide is Peroxisomal biogenesis factor 11 (pex11) (Schizosaccharomyces pombe (strain 972 / ATCC 24843) (Fission yeast)).